A 708-amino-acid chain; its full sequence is RUN and FYVE domain-containing protein 1 (708 aa).

Over residues 1-17 the composition is skewed to basic and acidic residues; it reads MADREGGCAAGRGRELE. The segment at 1–57 is disordered; sequence MADREGGCAAGRGRELEPELEPGPGPGSALEPGEEFEIVDRSQLPGPGDLRSATRPR. The region spanning 139-271 is the RUN domain; that stretch reads DADHAPLQQF…LDANLCLKGE (133 aa). A coiled-coil region spans residues 321–374; the sequence is TVGDLQTKIDGLEKTNSKLQEELSAATDRICSLQEEQQQLREQNELIRERSEKS. Residues Tyr389 and Tyr400 each carry the phosphotyrosine modification. Positions 405 to 617 form a coiled coil; sequence KQLKEEKKVR…QALQEMGLHL (213 aa). A disordered region spans residues 493–522; that stretch reads QVMSSMKQMEERLQHSERARQGAEERSHKL. A compositionally biased stretch (basic and acidic residues) spans 500–522; sequence QMEERLQHSERARQGAEERSHKL. Residues 615–625 form an interaction with RAB4 region; it reads LHLSQSKLKME. The residue at position 620 (Ser620) is a Phosphoserine. Residues 642–700 form an FYVE-type zinc finger; the sequence is DDEATHCRQCEKEFSISRRKHHCRNCGHIFCNTCSSNELALPSYPKPVRVCDSCHTLLL. Residues Cys648, Cys651, Cys664, Cys667, Cys672, Cys675, Cys692, and Cys695 each coordinate Zn(2+).

As to quaternary structure, self-assembles through coiled coil domains to drive ELVA (endo-lysosomal vesicular assembly) formation. Interacts with BMX. May interact with SSB. Interacts with RAB4 and RAB5 that have been activated by GTP-binding. Interacts WITH RAB14 and RAB4B (GTP-bound form); the interactions allow endosomal tethering and fusion. Interacts with ARL8B (GTP-bound form); the interaction is required for RUFY1 endosomal location and promotes interaction with RAB14. Post-translationally, phosphorylation on Tyr-389 and/or Tyr-400 is required for interaction with BMX and endosomal targeting. Broadly expressed, with highest levels in lung, testis, kidney and brain.

The protein resides in the early endosome membrane. In terms of biological role, activating adapter involved in cargo sorting from early/recycling endosomes. Regulates retrieval of proteins from endosomes to the trans-Golgi network through interaction with the dynein-dynactin complex. Dual effector of RAB4B and RAB14, mediates a cooperative interaction allowing endosomal tethering and fusion. Binds phospholipid vesicles containing phosphatidylinositol 3-phosphate and participates in early endosomal trafficking. In oocytes, self-assembles to form a protein matrix which hold together endolysosomes, autophagosomes and proteasomes and generate non-membrane-bound compartments called endo-lysosomal vesicular assemblies (ELVAs). In immature oocytes, ELVAs sequester ubiquitinated protein aggregates and degrade them upon oocyte maturation. This chain is RUN and FYVE domain-containing protein 1, found in Homo sapiens (Human).